Here is a 352-residue protein sequence, read N- to C-terminus: MTVAVGRPQSQRGAFDVLDDWLKRDRFVFVGWSGILLFPCAFLSIGGWLTGTTFVTSWYTHGLASSYLEGCNFLTVAISSPAYSMGHSLLFLWGPEAQWDFARWCQIGGLWSFTALHGAFALIGFCLRQIEIARLVGIRPYNAIAFTGPIAVFVSVFLMYPLGQSSWFFAPSFGVAGIFRFILFLQGFHNWTLNPFHMMGVAGILGGALLCAIHGATVENTLFQDGEAANTFRAFEPTQSEETYSMVTANRFWSQIFGIAFSNKRWLHFFMLFVPVTGLWMSSIGIVGLAFNLRAYDFVSQELRAADDPEFETFYTKNILLNEGIRAWMSPADQPHQNFMFPEEVLPRGNAL.

Residues 40 to 60 traverse the membrane as a helical segment; it reads CAFLSIGGWLTGTTFVTSWYT. His117 provides a ligand contact to chlorophyll a. The chain crosses the membrane as a helical span at residues 124–140; it reads GFCLRQIEIARLVGIRP. Residues Gln129 and Asn142 each contribute to the pheophytin a site. Residues 152 to 165 form a helical membrane-spanning segment; sequence VFVSVFLMYPLGQS. His197 contacts chlorophyll a. The helical transmembrane segment at 207–227 threads the bilayer; that stretch reads GALLCAIHGATVENTLFQDGE. His214 and Phe261 together coordinate a plastoquinone. His214 serves as a coordination point for Fe cation. His268 is a binding site for Fe cation. Residues 278-294 form a helical membrane-spanning segment; the sequence is GLWMSSIGIVGLAFNLR.

Belongs to the reaction center PufL/M/PsbA/D family. PSII is composed of 1 copy each of membrane proteins PsbA, PsbB, PsbC, PsbD, PsbE, PsbF, PsbH, PsbI, PsbJ, PsbK, PsbL, PsbM, PsbT, PsbX, PsbY, PsbZ, Psb30/Ycf12, peripheral proteins PsbO, CyanoQ (PsbQ), PsbU, PsbV and a large number of cofactors. It forms dimeric complexes. It depends on The D1/D2 heterodimer binds P680, chlorophylls that are the primary electron donor of PSII, and subsequent electron acceptors. It shares a non-heme iron and each subunit binds pheophytin, quinone, additional chlorophylls, carotenoids and lipids. There is also a Cl(-1) ion associated with D1 and D2, which is required for oxygen evolution. The PSII complex binds additional chlorophylls, carotenoids and specific lipids. as a cofactor.

The protein localises to the cellular thylakoid membrane. It carries out the reaction 2 a plastoquinone + 4 hnu + 2 H2O = 2 a plastoquinol + O2. Its function is as follows. Photosystem II (PSII) is a light-driven water:plastoquinone oxidoreductase that uses light energy to abstract electrons from H(2)O, generating O(2) and a proton gradient subsequently used for ATP formation. It consists of a core antenna complex that captures photons, and an electron transfer chain that converts photonic excitation into a charge separation. The D1/D2 (PsbA/PsbD) reaction center heterodimer binds P680, the primary electron donor of PSII as well as several subsequent electron acceptors. D2 is needed for assembly of a stable PSII complex. The chain is Photosystem II D2 protein from Trichodesmium erythraeum (strain IMS101).